The primary structure comprises 109 residues: Large ribosomal subunit protein uL24 (109 aa).

It belongs to the universal ribosomal protein uL24 family. In terms of assembly, part of the 50S ribosomal subunit.

Functionally, one of two assembly initiator proteins, it binds directly to the 5'-end of the 23S rRNA, where it nucleates assembly of the 50S subunit. One of the proteins that surrounds the polypeptide exit tunnel on the outside of the subunit. The polypeptide is Large ribosomal subunit protein uL24 (Mesoplasma florum (strain ATCC 33453 / NBRC 100688 / NCTC 11704 / L1) (Acholeplasma florum)).